The following is a 489-amino-acid chain: CBL-interacting serine/threonine-protein kinase 12 (489 aa).

One can recognise a Protein kinase domain in the interval 26–280 (YEMGKLLGHG…FPEIMENSWF (255 aa)). ATP contacts are provided by residues 32–40 (LGHGTFAKV) and K55. D148 serves as the catalytic Proton acceptor. Positions 166–195 (DFGLSAVSDQIRQDGLFHTFCGTPAYVAPE) are activation loop. Phosphoserine is present on S170. T184 carries the phosphothreonine modification. An NAF domain is found at 336 to 360 (PRPASLNAFDIISFSQGFDLSGLFD). A PPI region spans residues 363–392 (GEGSRFVSGAPVSKIISKLEEIAKVVSFTV).

It belongs to the protein kinase superfamily. CAMK Ser/Thr protein kinase family. SNF1 subfamily. In terms of assembly, interacts with CBL2 and CBL3. Requires Mn(2+) as cofactor. As to expression, expressed in roots and shoots.

The enzyme catalyses L-seryl-[protein] + ATP = O-phospho-L-seryl-[protein] + ADP + H(+). It carries out the reaction L-threonyl-[protein] + ATP = O-phospho-L-threonyl-[protein] + ADP + H(+). In terms of biological role, CIPK serine-threonine protein kinases interact with CBL proteins. Binding of a CBL protein to the regulatory NAF domain of CIPK protein lead to the activation of the kinase in a calcium-dependent manner. This chain is CBL-interacting serine/threonine-protein kinase 12 (CIPK12), found in Arabidopsis thaliana (Mouse-ear cress).